The primary structure comprises 268 residues: Glutamate 5-kinase (268 aa).

Lys15 contacts ATP. Residues Ser55, Asp142, and Asn158 each coordinate substrate. 178–179 (SD) contributes to the ATP binding site.

Belongs to the glutamate 5-kinase family.

The protein resides in the cytoplasm. It catalyses the reaction L-glutamate + ATP = L-glutamyl 5-phosphate + ADP. It functions in the pathway amino-acid biosynthesis; L-proline biosynthesis; L-glutamate 5-semialdehyde from L-glutamate: step 1/2. Functionally, catalyzes the transfer of a phosphate group to glutamate to form L-glutamate 5-phosphate. In Oenococcus oeni (strain ATCC BAA-331 / PSU-1), this protein is Glutamate 5-kinase.